Consider the following 286-residue polypeptide: 3-methyl-2-oxobutanoate hydroxymethyltransferase (286 aa).

Mg(2+) is bound by residues Asp-51 and Asp-90. Residues 51–52 (DS), Asp-90, and Lys-120 each bind 3-methyl-2-oxobutanoate. Glu-122 contacts Mg(2+). The active-site Proton acceptor is Glu-189. A disordered region spans residues 263–286 (TFPGPSHVFSGSKASSDLNGGDES).

The protein belongs to the PanB family. In terms of assembly, homodecamer; pentamer of dimers. The cofactor is Mg(2+).

Its subcellular location is the cytoplasm. The catalysed reaction is 3-methyl-2-oxobutanoate + (6R)-5,10-methylene-5,6,7,8-tetrahydrofolate + H2O = 2-dehydropantoate + (6S)-5,6,7,8-tetrahydrofolate. Its pathway is cofactor biosynthesis; (R)-pantothenate biosynthesis; (R)-pantoate from 3-methyl-2-oxobutanoate: step 1/2. Its function is as follows. Catalyzes the reversible reaction in which hydroxymethyl group from 5,10-methylenetetrahydrofolate is transferred onto alpha-ketoisovalerate to form ketopantoate. This chain is 3-methyl-2-oxobutanoate hydroxymethyltransferase, found in Mesorhizobium japonicum (strain LMG 29417 / CECT 9101 / MAFF 303099) (Mesorhizobium loti (strain MAFF 303099)).